The chain runs to 1716 residues: DNA-directed RNA polymerase I subunit RPA1 (1716 aa).

Residues Cys64, Cys67, Cys74, His77, Cys104, and Cys107 each coordinate Zn(2+). The segment at 110–201 is clamp; it reads LTCPRAAIHL…VAHFWKTHMA (92 aa). Zn(2+) contacts are provided by Cys205 and Cys208. The tract at residues 327–433 is clamp; it reads FTNGQTVNLQ…IRQILEKKEG (107 aa). The interval 410-423 is rudder; the sequence is DSDMDKLMLEKYPG. Residues Lys431, Arg436, and Arg443 each contribute to the DNA site. Positions 475–549 are involved in RRN3 binding to Pol I complex; that stretch reads YPQPVTPWNV…QGAKVVCRHV (75 aa). Arg559 lines the RNA pocket. Mg(2+)-binding residues include Asp595, Asp597, and Asp599. Asp599 provides a ligand contact to RNA. The funnel stretch occupies residues 812-890; it reads KPNADVMRQR…NEINKACMPF (79 aa). Positions 967–1008 are bridging helix; sequence RPPEFFFHCMAGREGLVDTAVKTSRSGYLQRCIIKHLEGLVI. The segment at 1067-1162 is mediates the interaction with TOP2A; that stretch reads ADPQKVLRHF…SLSVWRPDIH (96 aa). Positions 1214–1255 are trigger loop; the sequence is PGEAVGLLAAQSIGEPSTQMTLNTFHFAGRGEMNVTLGIPRL. Arg1256 provides a ligand contact to DNA. Positions 1368–1493 are disordered; the sequence is ASAFRSVNTR…RHSRPQGAEA (126 aa). Positions 1380–1397 are enriched in basic and acidic residues; it reads TQKDLDDTEDSGRNRREE. 2 stretches are compositionally biased toward acidic residues: residues 1398–1419 and 1429–1451; these read ERDEEEEGNIVDAEAEEGDADA and EEEVDYESEEEGEEEEEEDVQEE. Positions 1452–1464 are enriched in basic and acidic residues; sequence ENIKGEGAHQTHE. Residues 1465 to 1477 are compositionally biased toward acidic residues; it reads PDEEEGSGLEEES.

It belongs to the RNA polymerase beta' chain family. Component of the RNA polymerase I (Pol I) complex consisting of 13 subunits: a ten-subunit catalytic core composed of POLR1A/RPA1, POLR1B/RPA2, POLR1C/RPAC1, POLR1D/RPAC2, POLR1H/RPA12, POLR2E/RPABC1, POLR2F/RPABC2, POLR2H/RPABC3, POLR2K/RPABC4 and POLR2L/RPABC5; a mobile stalk subunit POLR1F/RPA43 protruding from the core and additional subunits homologous to general transcription factors POLR1E/RPA49 and POLR1G/RPA34. Part of Pol I pre-initiation complex (PIC), in which Pol I core assembles with RRN3 and promoter-bound UTBF and SL1/TIF-IB complex. Interacts (via dock II domain) with TOP2A; this interaction may assist Pol I transcription initiation by releasing supercoils occurring during DNA unwinding. Interacts with CAVIN1; this interaction induces the dissociation of Pol I complex paused at rDNA terminator sequences. Interacts with MYO1C. Interacts with ERBB2. Interacts with DDX11. Interacts with RECQL5. Requires Mg(2+) as cofactor. In terms of processing, phosphorylated.

The protein localises to the nucleus. It localises to the nucleolus. It is found in the chromosome. The catalysed reaction is RNA(n) + a ribonucleoside 5'-triphosphate = RNA(n+1) + diphosphate. Catalytic core component of RNA polymerase I (Pol I), a DNA-dependent RNA polymerase which synthesizes ribosomal RNA precursors using the four ribonucleoside triphosphates as substrates. Transcribes 47S pre-rRNAs from multicopy rRNA gene clusters, giving rise to 5.8S, 18S and 28S ribosomal RNAs. Pol I-mediated transcription cycle proceeds through transcription initiation, transcription elongation and transcription termination stages. During transcription initiation, Pol I pre-initiation complex (PIC) is recruited by the selectivity factor 1 (SL1/TIF-IB) complex bound to the core promoter that precedes an rDNA repeat unit. The PIC assembly bends the promoter favoring the formation of the transcription bubble and promoter escape. Once the polymerase has escaped from the promoter it enters the elongation phase during which RNA is actively polymerized, based on complementarity with the template DNA strand. Highly processive, assembles in structures referred to as 'Miller trees' where many elongating Pol I complexes queue and transcribe the same rDNA coding regions. At terminator sequences downstream of the rDNA gene, PTRF interacts with Pol I and halts Pol I transcription leading to the release of the RNA transcript and polymerase from the DNA. Forms Pol I active center together with the second largest subunit POLR1B/RPA2. Appends one nucleotide at a time to the 3' end of the nascent RNA, with POLR1A/RPA1 contributing a Mg(2+)-coordinating DxDGD motif, and POLR1B/RPA2 participating in the coordination of a second Mg(2+) ion and providing lysine residues believed to facilitate Watson-Crick base pairing between the incoming nucleotide and the template base. Typically, Mg(2+) ions direct a 5' nucleoside triphosphate to form a phosphodiester bond with the 3' hydroxyl of the preceding nucleotide of the nascent RNA, with the elimination of pyrophosphate. Has proofreading activity: Pauses and backtracks to allow the cleavage of a missincorporated nucleotide via POLR1H/RPA12. High Pol I processivity is associated with decreased transcription fidelity. This chain is DNA-directed RNA polymerase I subunit RPA1, found in Rattus norvegicus (Rat).